We begin with the raw amino-acid sequence, 144 residues long: Large ribosomal subunit protein uL11 (144 aa).

This sequence belongs to the universal ribosomal protein uL11 family. In terms of assembly, part of the ribosomal stalk of the 50S ribosomal subunit. Interacts with L10 and the large rRNA to form the base of the stalk. L10 forms an elongated spine to which L12 dimers bind in a sequential fashion forming a multimeric L10(L12)X complex. Contacts the CTC protein (RL25). In terms of processing, one or more lysine residues are methylated.

Its function is as follows. Forms part of the ribosomal stalk which helps the ribosome interact with GTP-bound translation factors. This chain is Large ribosomal subunit protein uL11, found in Deinococcus radiodurans (strain ATCC 13939 / DSM 20539 / JCM 16871 / CCUG 27074 / LMG 4051 / NBRC 15346 / NCIMB 9279 / VKM B-1422 / R1).